Here is a 312-residue protein sequence, read N- to C-terminus: tRNA dimethylallyltransferase (312 aa).

Position 17 to 24 (17 to 24 (GPTASGKT)) interacts with ATP. Residue 19–24 (TASGKT) participates in substrate binding. 3 interaction with substrate tRNA regions span residues 42-45 (DSAL), 166-170 (QRLLR), and 247-252 (RCVGYR).

This sequence belongs to the IPP transferase family. In terms of assembly, monomer. The cofactor is Mg(2+).

The catalysed reaction is adenosine(37) in tRNA + dimethylallyl diphosphate = N(6)-dimethylallyladenosine(37) in tRNA + diphosphate. Functionally, catalyzes the transfer of a dimethylallyl group onto the adenine at position 37 in tRNAs that read codons beginning with uridine, leading to the formation of N6-(dimethylallyl)adenosine (i(6)A). This is tRNA dimethylallyltransferase from Sodalis glossinidius (strain morsitans).